A 111-amino-acid chain; its full sequence is Probable 4-amino-4-deoxy-L-arabinose-phosphoundecaprenol flippase subunit ArnE (111 aa).

Helical transmembrane passes span 38–58, 61–81, and 91–111; these read LWLGLALICMGAAMVLWLLVL, LPVGIAYPMLSLNFVWVTLAA, and PRHWLGVALIISGIIILGSAA. In terms of domain architecture, EamA spans 40–109; the sequence is LGLALICMGA…IISGIIILGS (70 aa).

This sequence belongs to the ArnE family. Heterodimer of ArnE and ArnF.

It is found in the cell inner membrane. It participates in bacterial outer membrane biogenesis; lipopolysaccharide biosynthesis. Its function is as follows. Translocates 4-amino-4-deoxy-L-arabinose-phosphoundecaprenol (alpha-L-Ara4N-phosphoundecaprenol) from the cytoplasmic to the periplasmic side of the inner membrane. The chain is Probable 4-amino-4-deoxy-L-arabinose-phosphoundecaprenol flippase subunit ArnE from Salmonella agona (strain SL483).